The chain runs to 38 residues: Large ribosomal subunit protein bL36c (38 aa).

Belongs to the bacterial ribosomal protein bL36 family.

The protein localises to the plastid. It is found in the chloroplast. The sequence is that of Large ribosomal subunit protein bL36c (rpl36) from Mesostigma viride (Green alga).